The primary structure comprises 273 residues: Light-independent protochlorophyllide reductase iron-sulfur ATP-binding protein (273 aa).

ATP contacts are provided by residues 12–17 (GIGKST) and Lys-41. Residue Ser-16 participates in Mg(2+) binding. The [4Fe-4S] cluster site is built by Cys-97 and Cys-131. 182-183 (NR) serves as a coordination point for ATP.

Belongs to the NifH/BchL/ChlL family. Homodimer. Protochlorophyllide reductase is composed of three subunits; BchL, BchN and BchB. Requires [4Fe-4S] cluster as cofactor.

It carries out the reaction chlorophyllide a + oxidized 2[4Fe-4S]-[ferredoxin] + 2 ADP + 2 phosphate = protochlorophyllide a + reduced 2[4Fe-4S]-[ferredoxin] + 2 ATP + 2 H2O. It functions in the pathway porphyrin-containing compound metabolism; bacteriochlorophyll biosynthesis (light-independent). Functionally, component of the dark-operative protochlorophyllide reductase (DPOR) that uses Mg-ATP and reduced ferredoxin to reduce ring D of protochlorophyllide (Pchlide) to form chlorophyllide a (Chlide). This reaction is light-independent. The L component serves as a unique electron donor to the NB-component of the complex, and binds Mg-ATP. The chain is Light-independent protochlorophyllide reductase iron-sulfur ATP-binding protein from Roseiflexus sp. (strain RS-1).